The primary structure comprises 480 residues: Altronate oxidoreductase (480 aa).

Position 19 to 30 (19 to 30) interacts with NAD(+); that stretch reads ILQFGEGNFLRG.

The protein belongs to the mannitol dehydrogenase family. UxaB subfamily.

The catalysed reaction is D-altronate + NAD(+) = keto-D-tagaturonate + NADH + H(+). The protein operates within carbohydrate metabolism; pentose and glucuronate interconversion. This chain is Altronate oxidoreductase, found in Bacillus subtilis (strain 168).